A 104-amino-acid chain; its full sequence is Large ribosomal subunit protein uL24 (104 aa).

Belongs to the universal ribosomal protein uL24 family. In terms of assembly, part of the 50S ribosomal subunit.

In terms of biological role, one of two assembly initiator proteins, it binds directly to the 5'-end of the 23S rRNA, where it nucleates assembly of the 50S subunit. One of the proteins that surrounds the polypeptide exit tunnel on the outside of the subunit. The sequence is that of Large ribosomal subunit protein uL24 from Klebsiella pneumoniae (strain 342).